Reading from the N-terminus, the 278-residue chain is Envelope glycoprotein L (278 aa).

An N-terminal signal peptide occupies residues 1-30; the sequence is MCRRPDCGFSFSPGPVVLLWCCLLLPIVSS. Residues 43–256 enclose the gL betaherpesvirus-type domain; it reads VPAECPELTR…DKYYAGLPPE (214 aa). A disulfide bond links Cys-154 and Cys-159.

This sequence belongs to the herpesviridae glycoprotein L (gL) family. Betaherpesvirinae gL subfamily. In terms of assembly, interacts with glycoprotein H (gH); this interaction is necessary for the correct processing and cell surface expression of gH. Forms the envelope pentamer complex (PC) composed of gH, gL, UL128, UL130, and UL131A. The pentamer interacts with host NRP2. Forms the envelope trimer complex composed of gH, gL, and gO. The trimer interacts with host PDGFRA.

It is found in the virion membrane. The protein resides in the host cell membrane. The protein localises to the host Golgi apparatus. It localises to the host trans-Golgi network. Its function is as follows. The heterodimer glycoprotein H-glycoprotein L is required for the fusion of viral and plasma membranes leading to virus entry into the host cell. Acts as a functional inhibitor of gH and maintains gH in an inhibited form. Upon binding to host integrins, gL dissociates from gH leading to activation of the viral fusion glycoproteins gB and gH. In human cytomegalovirus, forms two distincts complexes to mediate viral entry, a trimer and a pentamer at the surface of the virion envelope. The gH-gL-gO trimer is required for infection in fibroblasts by interacting with host PDGFRA. The gH-gL-UL128-UL130-UL131A pentamer is essential for viral entry in epithelial, endothelial and myeloid cells via interaction with host NRP2. This is Envelope glycoprotein L from Human cytomegalovirus (strain AD169) (HHV-5).